We begin with the raw amino-acid sequence, 277 residues long: Large ribosomal subunit protein uL2 (277 aa).

2 disordered regions span residues 32-58 and 225-277; these read KSLT…RGGG and VAMN…RRNN.

This sequence belongs to the universal ribosomal protein uL2 family. Part of the 50S ribosomal subunit. Forms a bridge to the 30S subunit in the 70S ribosome.

Functionally, one of the primary rRNA binding proteins. Required for association of the 30S and 50S subunits to form the 70S ribosome, for tRNA binding and peptide bond formation. It has been suggested to have peptidyltransferase activity; this is somewhat controversial. Makes several contacts with the 16S rRNA in the 70S ribosome. This is Large ribosomal subunit protein uL2 from Borrelia duttonii (strain Ly).